We begin with the raw amino-acid sequence, 186 residues long: dCTP deaminase (186 aa).

Residue 107–112 (KSSYAR) participates in dCTP binding. Residue E133 is the Proton donor/acceptor of the active site. Q152, Y166, and Q176 together coordinate dCTP.

It belongs to the dCTP deaminase family. In terms of assembly, homotrimer.

It catalyses the reaction dCTP + H2O + H(+) = dUTP + NH4(+). It participates in pyrimidine metabolism; dUMP biosynthesis; dUMP from dCTP (dUTP route): step 1/2. Functionally, catalyzes the deamination of dCTP to dUTP. This chain is dCTP deaminase, found in Chloroflexus aurantiacus (strain ATCC 29366 / DSM 635 / J-10-fl).